The primary structure comprises 484 residues: Glutamyl-tRNA(Gln) amidotransferase subunit A (484 aa).

Active-site charge relay system residues include Lys-76 and Ser-151. The active-site Acyl-ester intermediate is the Ser-175.

The protein belongs to the amidase family. GatA subfamily. In terms of assembly, heterotrimer of A, B and C subunits.

The enzyme catalyses L-glutamyl-tRNA(Gln) + L-glutamine + ATP + H2O = L-glutaminyl-tRNA(Gln) + L-glutamate + ADP + phosphate + H(+). In terms of biological role, allows the formation of correctly charged Gln-tRNA(Gln) through the transamidation of misacylated Glu-tRNA(Gln) in organisms which lack glutaminyl-tRNA synthetase. The reaction takes place in the presence of glutamine and ATP through an activated gamma-phospho-Glu-tRNA(Gln). This Halorhodospira halophila (strain DSM 244 / SL1) (Ectothiorhodospira halophila (strain DSM 244 / SL1)) protein is Glutamyl-tRNA(Gln) amidotransferase subunit A.